The following is a 186-amino-acid chain: Prorelaxin 1 (186 aa).

The signal sequence occupies residues 1–22 (MSSRLLLQLLGFWLFLSQPCRA). 3 disulfides stabilise this stretch: C36–C173, C48–C186, and C172–C177. Positions 58 to 158 (SQEEPAPLAR…LKYLGSDAQS (101 aa)) are cleaved as a propeptide — connecting peptide. The residue at position 163 (Q163) is a Pyrrolidone carboxylic acid.

The protein belongs to the insulin family. In terms of assembly, heterodimer of a B chain and an A chain linked by two disulfide bonds.

The protein localises to the secreted. Relaxin is an ovarian hormone that acts with estrogen to produce dilatation of the birth canal in many mammals. The chain is Prorelaxin 1 (Rln1) from Rattus norvegicus (Rat).